We begin with the raw amino-acid sequence, 122 residues long: Large ribosomal subunit protein uL14 (122 aa).

Belongs to the universal ribosomal protein uL14 family. In terms of assembly, part of the 50S ribosomal subunit. Forms a cluster with proteins L3 and L19. In the 70S ribosome, L14 and L19 interact and together make contacts with the 16S rRNA in bridges B5 and B8.

In terms of biological role, binds to 23S rRNA. Forms part of two intersubunit bridges in the 70S ribosome. The chain is Large ribosomal subunit protein uL14 from Methylibium petroleiphilum (strain ATCC BAA-1232 / LMG 22953 / PM1).